Consider the following 1220-residue polypeptide: ATP-dependent helicase/nuclease subunit A (1220 aa).

The region spanning 9 to 473 (VIWTDDQWKS…IDLSQNFRSR (465 aa)) is the UvrD-like helicase ATP-binding domain. 30-37 (AAAGSGKT) is an ATP binding site. The UvrD-like helicase C-terminal domain maps to 474–782 (PEVLSTTNYL…RMMTIHASKG (309 aa)).

The protein belongs to the helicase family. AddA subfamily. In terms of assembly, heterodimer of AddA and AddB/RexB. Mg(2+) is required as a cofactor.

It catalyses the reaction Couples ATP hydrolysis with the unwinding of duplex DNA by translocating in the 3'-5' direction.. It carries out the reaction ATP + H2O = ADP + phosphate + H(+). In terms of biological role, the heterodimer acts as both an ATP-dependent DNA helicase and an ATP-dependent, dual-direction single-stranded exonuclease. Recognizes the chi site generating a DNA molecule suitable for the initiation of homologous recombination. The AddA nuclease domain is required for chi fragment generation; this subunit has the helicase and 3' -&gt; 5' nuclease activities. The sequence is that of ATP-dependent helicase/nuclease subunit A from Staphylococcus carnosus (strain TM300).